The sequence spans 882 residues: Alanine--tRNA ligase (882 aa).

Zn(2+)-binding residues include histidine 568, histidine 572, cysteine 670, and histidine 674.

The protein belongs to the class-II aminoacyl-tRNA synthetase family. Zn(2+) serves as cofactor.

Its subcellular location is the cytoplasm. The catalysed reaction is tRNA(Ala) + L-alanine + ATP = L-alanyl-tRNA(Ala) + AMP + diphosphate. Functionally, catalyzes the attachment of alanine to tRNA(Ala) in a two-step reaction: alanine is first activated by ATP to form Ala-AMP and then transferred to the acceptor end of tRNA(Ala). Also edits incorrectly charged Ser-tRNA(Ala) and Gly-tRNA(Ala) via its editing domain. The chain is Alanine--tRNA ligase from Lactobacillus gasseri (strain ATCC 33323 / DSM 20243 / BCRC 14619 / CIP 102991 / JCM 1131 / KCTC 3163 / NCIMB 11718 / NCTC 13722 / AM63).